We begin with the raw amino-acid sequence, 1059 residues long: DNA-directed RNA polymerase subunit beta (1059 aa).

Belongs to the RNA polymerase beta chain family. In terms of assembly, in plastids the minimal PEP RNA polymerase catalytic core is composed of four subunits: alpha, beta, beta', and beta''. When a (nuclear-encoded) sigma factor is associated with the core the holoenzyme is formed, which can initiate transcription (Potential).

It is found in the plastid. Its subcellular location is the apicoplast. It carries out the reaction RNA(n) + a ribonucleoside 5'-triphosphate = RNA(n+1) + diphosphate. Functionally, DNA-dependent RNA polymerase catalyzes the transcription of DNA into RNA using the four ribonucleoside triphosphates as substrates. This chain is DNA-directed RNA polymerase subunit beta (rpoB), found in Eimeria tenella (Coccidian parasite).